The chain runs to 479 residues: Ribosomal RNA small subunit methyltransferase F (479 aa).

Residues 125–131, E149, D176, and D194 each bind S-adenosyl-L-methionine; that span reads AAAPGSK. C247 functions as the Nucleophile in the catalytic mechanism.

It belongs to the class I-like SAM-binding methyltransferase superfamily. RsmB/NOP family.

Its subcellular location is the cytoplasm. It carries out the reaction cytidine(1407) in 16S rRNA + S-adenosyl-L-methionine = 5-methylcytidine(1407) in 16S rRNA + S-adenosyl-L-homocysteine + H(+). Its function is as follows. Specifically methylates the cytosine at position 1407 (m5C1407) of 16S rRNA. The protein is Ribosomal RNA small subunit methyltransferase F of Shigella dysenteriae serotype 1 (strain Sd197).